A 250-amino-acid polypeptide reads, in one-letter code: MPINRIALGSHQEVYHPGALKAAFAEFISTLIFVFAGQGSGMAFSKLTGGGPTTPAGLIAAAVAHAFALFVAVSVGANISGGHVNPAVTFGAFVGGNITLFRGLLYWVAQLLGSTVACFLLRFSTGGQATGTFGLTGVSVWEALVLEIVMTFGLVYTVYATAVDPKKGSLGTIAPIAIGFIVGANILVGGAFDGASMNPAVSFGPALVSWEWGYQWVYWVGPLIGGGLAGVIYELLFISHTHEQLPSTDY.

Helical transmembrane passes span 24–44 and 56–76; these read FAEF…GMAF and AGLI…VSVG. The NPA 1 signature appears at 85–87; it reads NPA. The next 3 helical transmembrane spans lie at 104-126, 143-163, and 172-192; these read LLYW…FSTG, ALVL…ATAV, and TIAP…GGAF. Residues 198-200 carry the NPA 2 motif; the sequence is NPA. Residues 218–238 form a helical membrane-spanning segment; it reads YWVGPLIGGGLAGVIYELLFI.

It belongs to the MIP/aquaporin (TC 1.A.8) family. TIP (TC 1.A.8.10) subfamily. As to expression, expressed in roots, shoots, leaves, tassels, ears and embryos. Expressed in meristems and zones of cell enlargement: tips of primary and lateral roots, leaf primordia, and male and female inflorescence meristems. Highly expressed in the root epidermis and endodermis, parenchyma cells surrounding mature xylem vessels in the root and the stem, phloem companion cells and a ring of cells around the phloem strand in the stem and the leaf sheath, and the basal endosperm transfer cells in developing kernels.

Its subcellular location is the vacuole membrane. Functionally, water channel required to facilitate the transport of water across cell membrane. May support the rapid influx of water into vacuoles during cell expansion, permit osmotic equilibration between the cytosol and the vacuolar content and rapid transcellular water flow through living cells. Its function is impaired by Hg(2+). This is Aquaporin TIP1-1 (TIP1-1) from Zea mays (Maize).